The sequence spans 488 residues: Altronate oxidoreductase (488 aa).

18-29 serves as a coordination point for NAD(+); the sequence is VIQFGEGNFLRA.

Belongs to the mannitol dehydrogenase family. UxaB subfamily.

The catalysed reaction is D-altronate + NAD(+) = keto-D-tagaturonate + NADH + H(+). It functions in the pathway carbohydrate metabolism; pentose and glucuronate interconversion. This chain is Altronate oxidoreductase, found in Pectobacterium atrosepticum (strain SCRI 1043 / ATCC BAA-672) (Erwinia carotovora subsp. atroseptica).